Consider the following 1872-residue polypeptide: Plexin-A3 (1872 aa).

Positions 1-19 are cleaved as a signal peptide; the sequence is MPTVCLLPLLFFTIGGCLG. The Sema domain maps to 20–489; it reads SSRPFRTFVV…SEKQVSQLPV (470 aa). Residues 20 to 1220 lie on the Extracellular side of the membrane; the sequence is SSRPFRTFVV…ITADRALTLP (1201 aa). An N-linked (GlcNAc...) asparagine glycan is attached at Asn-60. 9 cysteine pairs are disulfide-bonded: Cys-78/Cys-87, Cys-113/Cys-121, Cys-267/Cys-388, Cys-283/Cys-339, Cys-357/Cys-376, Cys-492/Cys-509, Cys-498/Cys-540, Cys-501/Cys-518, and Cys-512/Cys-524. A glycan (N-linked (GlcNAc...) asparagine) is linked at Asn-549. A disulfide bridge links Cys-575 with Cys-595. IPT/TIG domains lie at 841–934, 936–1021, 1024–1123, and 1126–1212; these read PRIT…YSFV, PTFD…YTYT, PTVT…FTYY, and PSFE…LHIT. Asn-1163 carries N-linked (GlcNAc...) asparagine glycosylation. The helical transmembrane segment at 1221–1241 threads the bilayer; it reads AMVGLAAGGGLLLLAITVVLV. The stretch at 1240 to 1294 forms a coiled coil; sequence LVAYKRKTQDADRTLKRLQLQMDNLESRVALECKEAFAELQTDINELTNHMDGVQ. The Cytoplasmic portion of the chain corresponds to 1242 to 1872; it reads AYKRKTQDAD…QIITLVSSSS (631 aa). Ser-1597 is subject to Phosphoserine.

Belongs to the plexin family. As to expression, detected in embryonic hindbrain, spinal cord, dorsal root ganglion, trigeminal ganglion and superior cervical ganglion. In newborns, detected throughout all layers of the hippocampus.

The protein localises to the cell membrane. Its function is as follows. Coreceptor for SEMA3A and SEMA3F. Necessary for signaling by class 3 semaphorins and subsequent remodeling of the cytoskeleton. Plays a role in axon guidance in the developing nervous system. Regulates the migration of sympathetic neurons, but not of neural crest precursors. Required for normal dendrite spine morphology in pyramidal neurons. May play a role in regulating semaphorin-mediated programmed cell death in the developing nervous system. Class 3 semaphorins bind to a complex composed of a neuropilin and a plexin. The plexin modulates the affinity of the complex for specific semaphorins, and its cytoplasmic domain is required for the activation of down-stream signaling events in the cytoplasm. This Mus musculus (Mouse) protein is Plexin-A3 (Plxna3).